The sequence spans 504 residues: Transcription factor NDT80 (504 aa).

Disordered stretches follow at residues 64 to 172, 283 to 310, and 477 to 504; these read MHFN…QHHM, NGFP…NQHA, and RGRS…TPPQ. Composition is skewed to low complexity over residues 73 to 87, 103 to 145, 153 to 172, and 292 to 301; these read QQQQ…QQQQ, QGPT…ARQP, QQAQ…QHHM, and HPQNQPQNHP. Positions 160 to 488 form a DNA-binding region, NDT80; the sequence is QADAQSQAQQ…RSPSSYHKDR (329 aa).

The protein resides in the nucleus. In terms of biological role, meiosis-specific transcription factor that binds to the middle sporulation element (MSE) of targeted genes corresponding to the consensus sequence 5'-ACACAAA-3'. Acts as an activator of CDR1 induction by antifungal drugs. Modulates azole sensitivity by controlling the expression of ergosterol biosynthesis genes. Required for hyphal growth in response to different filament-inducing cues and for the proper expression of genes characterizing the filamentous transcriptional program including noteworthy genes encoding cell wall components, such as HWP1, ECE1, RBT4, and ALS3. Is essential for the completion of cell separation through the direct transcriptional regulation of genes encoding the chitinase CHT3 and the cell wall glucosidase SUN41. Required for biofilm formation and plays a key role in microcolony formation under both flow and static conditions and to epithelial surfaces. Essential for virulence. This Candida albicans (strain SC5314 / ATCC MYA-2876) (Yeast) protein is Transcription factor NDT80.